Here is a 446-residue protein sequence, read N- to C-terminus: 23S rRNA (uracil(1939)-C(5))-methyltransferase RlmD (446 aa).

In terms of domain architecture, TRAM spans 6 to 64; the sequence is KKLPQESITCEIESLSHEGRGVSHKDGKTLFVEGALPGETVTARYVNSRRSYDELAVEE. C77, C83, C86, and C165 together coordinate [4Fe-4S] cluster. Positions 275, 304, 309, 325, 352, and 377 each coordinate S-adenosyl-L-methionine. Residue C403 is the Nucleophile of the active site.

This sequence belongs to the class I-like SAM-binding methyltransferase superfamily. RNA M5U methyltransferase family. RlmD subfamily.

It catalyses the reaction uridine(1939) in 23S rRNA + S-adenosyl-L-methionine = 5-methyluridine(1939) in 23S rRNA + S-adenosyl-L-homocysteine + H(+). Its function is as follows. Catalyzes the formation of 5-methyl-uridine at position 1939 (m5U1939) in 23S rRNA. The chain is 23S rRNA (uracil(1939)-C(5))-methyltransferase RlmD from Hahella chejuensis (strain KCTC 2396).